The sequence spans 144 residues: Large ribosomal subunit protein uL13 (144 aa).

This sequence belongs to the universal ribosomal protein uL13 family. Part of the 50S ribosomal subunit.

This protein is one of the early assembly proteins of the 50S ribosomal subunit, although it is not seen to bind rRNA by itself. It is important during the early stages of 50S assembly. The sequence is that of Large ribosomal subunit protein uL13 from Ruminiclostridium cellulolyticum (strain ATCC 35319 / DSM 5812 / JCM 6584 / H10) (Clostridium cellulolyticum).